The following is a 251-amino-acid chain: Flagellar L-ring protein (251 aa).

A signal peptide spans 1–17 (MIRKLAALIVAAAALQA). The N-palmitoyl cysteine moiety is linked to residue Cys18. A lipid anchor (S-diacylglycerol cysteine) is attached at Cys18.

It belongs to the FlgH family. In terms of assembly, the basal body constitutes a major portion of the flagellar organelle and consists of four rings (L,P,S, and M) mounted on a central rod.

The protein localises to the cell outer membrane. It is found in the bacterial flagellum basal body. Functionally, assembles around the rod to form the L-ring and probably protects the motor/basal body from shearing forces during rotation. The sequence is that of Flagellar L-ring protein from Maricaulis maris (strain MCS10) (Caulobacter maris).